We begin with the raw amino-acid sequence, 492 residues long: N-succinylglutamate 5-semialdehyde dehydrogenase (492 aa).

220-225 lines the NAD(+) pocket; it reads GSANTG. Catalysis depends on residues Glu243 and Cys277.

It belongs to the aldehyde dehydrogenase family. AstD subfamily.

It carries out the reaction N-succinyl-L-glutamate 5-semialdehyde + NAD(+) + H2O = N-succinyl-L-glutamate + NADH + 2 H(+). It functions in the pathway amino-acid degradation; L-arginine degradation via AST pathway; L-glutamate and succinate from L-arginine: step 4/5. Its function is as follows. Catalyzes the NAD-dependent reduction of succinylglutamate semialdehyde into succinylglutamate. In Escherichia coli O81 (strain ED1a), this protein is N-succinylglutamate 5-semialdehyde dehydrogenase.